We begin with the raw amino-acid sequence, 145 residues long: tRNA-specific adenosine deaminase (145 aa).

The 116-residue stretch at 1–116 (MREALKQAEI…SNLRYFNSKA (116 aa)) folds into the CMP/dCMP-type deaminase domain. His48 is a Zn(2+) binding site. Glu50 serves as the catalytic Proton donor. Zn(2+) is bound by residues Cys78 and Cys81.

This sequence belongs to the cytidine and deoxycytidylate deaminase family. Homodimer. Zn(2+) is required as a cofactor.

The catalysed reaction is adenosine(34) in tRNA + H2O + H(+) = inosine(34) in tRNA + NH4(+). Catalyzes the deamination of adenosine to inosine at the wobble position 34 of tRNA(Arg2). The chain is tRNA-specific adenosine deaminase from Rickettsia bellii (strain RML369-C).